Consider the following 248-residue polypeptide: Probable aquaporin TIP2-1 (248 aa).

Helical transmembrane passes span 20–40 (AYVAEFIATLLFVFAGVGSAI) and 54–74 (AGLVAIAIAHALALFVGVSVA). The NPA 1 motif lies at 83–85 (NPA). Transmembrane regions (helical) follow at residues 97 to 119 (TILTGLFYWIAQLLGASIACLLL), 141 to 161 (GVVMEIVITFALVYTVYATAA), and 168 to 188 (LGTIAPIAIGFIVGANILAAG). The NPA 2 motif lies at 196 to 198 (NPA). The helical transmembrane segment at 217-237 (WVGPLIGGGLAGLVYGDVFIG) threads the bilayer.

This sequence belongs to the MIP/aquaporin (TC 1.A.8) family. TIP (TC 1.A.8.10) subfamily. As to expression, expressed in roots and anthers.

The protein resides in the vacuole membrane. Aquaporins facilitate the transport of water and small neutral solutes across cell membranes. May be involved in transport from the vacuolar compartment to the cytoplasm. The protein is Probable aquaporin TIP2-1 (TIP2-1) of Oryza sativa subsp. japonica (Rice).